Consider the following 321-residue polypeptide: Malate dehydrogenase (321 aa).

NAD(+) is bound by residues 10–15 (GAGQIG) and Asp-34. Arg-83 and Arg-89 together coordinate substrate. Residues Asn-96 and 119–121 (ITN) contribute to the NAD(+) site. Substrate-binding residues include Asn-121 and Arg-152. His-176 acts as the Proton acceptor in catalysis.

It belongs to the LDH/MDH superfamily. MDH type 3 family.

The catalysed reaction is (S)-malate + NAD(+) = oxaloacetate + NADH + H(+). In terms of biological role, catalyzes the reversible oxidation of malate to oxaloacetate. The protein is Malate dehydrogenase of Methylocella silvestris (strain DSM 15510 / CIP 108128 / LMG 27833 / NCIMB 13906 / BL2).